A 257-amino-acid chain; its full sequence is Hydroxyacylglutathione hydrolase (257 aa).

Positions 54, 56, 58, 59, 113, 137, and 175 each coordinate Zn(2+).

This sequence belongs to the metallo-beta-lactamase superfamily. Glyoxalase II family. As to quaternary structure, monomer. Zn(2+) is required as a cofactor.

The catalysed reaction is an S-(2-hydroxyacyl)glutathione + H2O = a 2-hydroxy carboxylate + glutathione + H(+). It functions in the pathway secondary metabolite metabolism; methylglyoxal degradation; (R)-lactate from methylglyoxal: step 2/2. Functionally, thiolesterase that catalyzes the hydrolysis of S-D-lactoyl-glutathione to form glutathione and D-lactic acid. In Trichodesmium erythraeum (strain IMS101), this protein is Hydroxyacylglutathione hydrolase.